Reading from the N-terminus, the 283-residue chain is Phosphatidylglycerol--prolipoprotein diacylglyceryl transferase (283 aa).

7 helical membrane-spanning segments follow: residues 18–38, 59–79, 91–111, 124–144, 185–205, 213–233, and 251–271; these read LFGH…IILG, LAVY…VLFY, IFVT…IIIA, ILWV…MIRL, TQIY…WLYW, YSGL…FIIE, and GLNM…WLII. Position 143 (arginine 143) interacts with a 1,2-diacyl-sn-glycero-3-phospho-(1'-sn-glycerol).

It belongs to the Lgt family.

Its subcellular location is the cell inner membrane. The enzyme catalyses L-cysteinyl-[prolipoprotein] + a 1,2-diacyl-sn-glycero-3-phospho-(1'-sn-glycerol) = an S-1,2-diacyl-sn-glyceryl-L-cysteinyl-[prolipoprotein] + sn-glycerol 1-phosphate + H(+). It functions in the pathway protein modification; lipoprotein biosynthesis (diacylglyceryl transfer). Its function is as follows. Catalyzes the transfer of the diacylglyceryl group from phosphatidylglycerol to the sulfhydryl group of the N-terminal cysteine of a prolipoprotein, the first step in the formation of mature lipoproteins. In Porphyromonas gingivalis (strain ATCC 33277 / DSM 20709 / CIP 103683 / JCM 12257 / NCTC 11834 / 2561), this protein is Phosphatidylglycerol--prolipoprotein diacylglyceryl transferase.